Here is a 266-residue protein sequence, read N- to C-terminus: Pre-mRNA-splicing factor CWC26 (266 aa).

Disordered stretches follow at residues 1 to 37 (MALH…DKTS) and 118 to 149 (TRKT…KYED). Positions 16–26 (PKNKTKKKKKE) are enriched in basic residues. A compositionally biased stretch (basic and acidic residues) spans 122–149 (IYRDAQGHKIQEDSKIDDSSFSRSKYED).

Belongs to the CWC26 family. Belongs to the pre-mRNA retention and splicing (RES) complex composed of at least BUD13, IST3 and PML1. May also belong to the CWC complex (or CEF1-associated complex) composed of the U2, U5 and U6 snRNAs and at least BUD13, BUD31, BRR2, CDC40, CEF1, CLF1, CUS1, CWC2, CWC15, CWC21, CWC22, CWC23, CWC24, CWC25, CWC27, ECM2, HSH155, IST3, ISY1, LEA1, MSL1, NTC20, PRP8, PRP9, PRP11, PRP19, PRP21, PRP22, PRP45, PRP46, SLU7, SMB1, SMD1, SMD2, SMD3, SMX2, SMX3, SNT309, SNU114, SPP2, SYF1, SYF2, RSE1 and YJU2. Interacts with IST3 and PML1.

It is found in the cytoplasm. It localises to the nucleus. Its function is as follows. Required for efficient splicing and pre-mRNA nuclear retention. May also be involved in positioning the proximal bud pole signal. In Saccharomyces cerevisiae (strain ATCC 204508 / S288c) (Baker's yeast), this protein is Pre-mRNA-splicing factor CWC26 (BUD13).